We begin with the raw amino-acid sequence, 990 residues long: Protein argonaute 7 (990 aa).

The span at 1–13 (MEEKTHHHHHSTN) shows a compositional bias: basic residues. The tract at residues 1–25 (MEEKTHHHHHSTNKHIPSSKSRTPL) is disordered. One can recognise a PAZ domain in the interval 379-484 (EFLTDLPRNK…LPMELCMICE (106 aa)). The region spanning 649 to 950 (LIICVMEKKH…AAYRGRLYIE (302 aa)) is the Piwi domain. The interval 953-973 (SESNGGSMNPSSVSRVGPPKT) is disordered. A compositionally biased stretch (polar residues) spans 954–966 (ESNGGSMNPSSVS).

Belongs to the argonaute family. Ago subfamily. As to expression, expressed in leaves and floral buds, and at low levels in roots.

Functionally, involved in RNA-mediated post-transcriptional gene silencing (PTGS). Main component of the RNA-induced silencing complex (RISC) that binds to a short guide RNA such as a microRNA (miRNA) or small interfering RNA (siRNA). RISC uses the mature miRNA or siRNA as a guide for slicer-directed cleavage of homologous mRNAs to repress gene expression. Required for the processing of 21 nucleotide trans-acting siRNAs (ta-siRNAs) derived from TAS3a transcripts. Associates preferentially with the microRNA (miRNA) miR390 which guides the cleavage of TAS3 precursor RNA. Seems to act as miR390 specific slicer. Associates mainly with small RNAs of 21 nucleotide in length and with a 5' terminal adenosine. Acts in the RDR6/SGS3/DCL4/AGO7 trans-acting siRNA pathway involved in leaf developmental timing. Does not seem to act on leaf polarity. Required for the production of the 30-40nt bacterial-induced long siRNAs (lsiRNA). Involved in antiviral RNA silencing by contributing to efficient viral RNAs clearance. Targets less structured viral RNAs than AGO1 which is capable of targeting RNAs with more compact structures. The chain is Protein argonaute 7 (AGO7) from Arabidopsis thaliana (Mouse-ear cress).